The primary structure comprises 129 residues: Urease subunit beta (129 aa).

This sequence belongs to the urease beta subunit family. As to quaternary structure, heterotrimer of UreA (gamma), UreB (beta) and UreC (alpha) subunits. Three heterotrimers associate to form the active enzyme.

Its subcellular location is the cytoplasm. It catalyses the reaction urea + 2 H2O + H(+) = hydrogencarbonate + 2 NH4(+). It participates in nitrogen metabolism; urea degradation; CO(2) and NH(3) from urea (urease route): step 1/1. The sequence is that of Urease subunit beta from Photorhabdus laumondii subsp. laumondii (strain DSM 15139 / CIP 105565 / TT01) (Photorhabdus luminescens subsp. laumondii).